The primary structure comprises 475 residues: Ras-GEF domain-containing family member 1A (475 aa).

The N-terminal Ras-GEF domain occupies 33 to 164 (QDGSLVSGSL…SISQMTQNVL (132 aa)). One can recognise a Ras-GEF domain in the interval 208–455 (DPLILAQQLT…FLASFENEGP (248 aa)).

Its function is as follows. Guanine nucleotide exchange factor (GEF) with specificity for rap2a and other Ras family proteins (in vitro). Plays a role in cell migration. This is Ras-GEF domain-containing family member 1A (rasgef1a) from Xenopus tropicalis (Western clawed frog).